A 138-amino-acid chain; its full sequence is ATP synthase epsilon chain (138 aa).

The protein belongs to the ATPase epsilon chain family. F-type ATPases have 2 components, CF(1) - the catalytic core - and CF(0) - the membrane proton channel. CF(1) has five subunits: alpha(3), beta(3), gamma(1), delta(1), epsilon(1). CF(0) has three main subunits: a, b and c.

It is found in the cell membrane. In terms of biological role, produces ATP from ADP in the presence of a proton gradient across the membrane. The chain is ATP synthase epsilon chain from Streptococcus equi subsp. equi (strain 4047).